The primary structure comprises 471 residues: Sulfate adenylyltransferase subunit 1 (471 aa).

The 218-residue stretch at 22–239 (KDMLRFLTCG…NIEIGEDDNL (218 aa)) folds into the tr-type G domain. A G1 region spans residues 31–38 (GSVDDGKS). Residue 31–38 (GSVDDGKS) coordinates GTP. Positions 89-93 (GITID) are G2. The G3 stretch occupies residues 110 to 113 (DTPG). GTP is bound by residues 110 to 114 (DTPGH) and 165 to 168 (NKMD). The interval 165-168 (NKMD) is G4. The tract at residues 202–204 (SAL) is G5.

It belongs to the TRAFAC class translation factor GTPase superfamily. Classic translation factor GTPase family. CysN/NodQ subfamily. As to quaternary structure, heterodimer composed of CysD, the smaller subunit, and CysN.

It catalyses the reaction sulfate + ATP + H(+) = adenosine 5'-phosphosulfate + diphosphate. It functions in the pathway sulfur metabolism; hydrogen sulfide biosynthesis; sulfite from sulfate: step 1/3. Its function is as follows. With CysD forms the ATP sulfurylase (ATPS) that catalyzes the adenylation of sulfate producing adenosine 5'-phosphosulfate (APS) and diphosphate, the first enzymatic step in sulfur assimilation pathway. APS synthesis involves the formation of a high-energy phosphoric-sulfuric acid anhydride bond driven by GTP hydrolysis by CysN coupled to ATP hydrolysis by CysD. In Alteromonas mediterranea (strain DSM 17117 / CIP 110805 / LMG 28347 / Deep ecotype), this protein is Sulfate adenylyltransferase subunit 1.